Reading from the N-terminus, the 379-residue chain is F-box protein At1g30200 (379 aa).

The 49-residue stretch at aspartate 24–aspartate 72 folds into the F-box domain.

The polypeptide is F-box protein At1g30200 (Arabidopsis thaliana (Mouse-ear cress)).